Consider the following 204-residue polypeptide: Terpene cyclase ausL (204 aa).

5 helical membrane-spanning segments follow: residues 19–39 (LSEM…LAMV), 49–69 (AIAV…AWIY), 75–95 (HWQG…AATL), 114–134 (LVLL…CLAL), and 138–158 (GALG…SAAV).

It belongs to the paxB family.

The protein resides in the membrane. Its pathway is secondary metabolite biosynthesis; terpenoid biosynthesis. In terms of biological role, terpene cyclase; part of the gene cluster B that mediates the biosynthesis of austinol and dehydroaustinol, two fungal meroterpenoids. The first step of the pathway is the synthesis of 3,5-dimethylorsellinic acid by the polyketide synthase ausA. 3,5-dimethylorsellinic acid is then prenylated by the polyprenyl transferase ausN. Further epoxidation by the FAD-dependent monooxygenase ausM and cyclization by the probable terpene cyclase ausL lead to the formation of protoaustinoid A. Protoaustinoid A is then oxidized to spiro-lactone preaustinoid A3 by the combined action of the FAD-binding monooxygenases ausB and ausC, and the dioxygenase ausE. Acid-catalyzed keto-rearrangement and ring contraction of the tetraketide portion of preaustinoid A3 by ausJ lead to the formation of preaustinoid A4. The aldo-keto reductase ausK, with the help of ausH, is involved in the next step by transforming preaustinoid A4 into isoaustinone which is in turn hydroxylated by the P450 monooxygenase ausI to form austinolide. Finally, the cytochrome P450 monooxygenase ausG modifies austinolide to austinol. Austinol can be further modified to dehydroaustinol which forms a diffusible complex with diorcinol that initiates conidiation. Due to genetic rearrangements of the clusters and the subsequent loss of some enzymes, the end products of the Emericella nidulans austinoid biosynthesis clusters are austinol and dehydroaustinol, even if additional enzymes, such as the O-acetyltransferase ausQ and the cytochrome P450 monooxygenase ausR are still functional. The protein is Terpene cyclase ausL of Emericella nidulans (strain FGSC A4 / ATCC 38163 / CBS 112.46 / NRRL 194 / M139) (Aspergillus nidulans).